Here is a 393-residue protein sequence, read N- to C-terminus: N-acyl-phosphatidylethanolamine-hydrolyzing phospholipase D (393 aa).

Position 1 is an N-acetylmethionine (Met1). Residues 1–16 are compositionally biased toward polar residues; sequence MDENESNQSLMTSSQY. The tract at residues 1 to 40 is disordered; that stretch reads MDENESNQSLMTSSQYPKEAVRKRQNSARNSGGSDSSRFS. His185 and His187 together coordinate Zn(2+). Tyr188 contributes to the an N-acyl-1,2-diacyl-sn-glycero-3-phosphoethanolamine binding site. The Zn(2+) site is built by Asp189, His190, and His253. 2 residues coordinate deoxycholate: Lys256 and Met260. Asp284 is a Zn(2+) binding site. His321 is an an N-acyl-1,2-diacyl-sn-glycero-3-phosphoethanolamine binding site. A Zn(2+)-binding site is contributed by His343. Position 348 (Ala348) interacts with deoxycholate.

Belongs to the NAPE-PLD family. As to quaternary structure, homodimer. Bile acids promote the assembly of inactive monomers into an active dimer and enable catalysis. Requires Zn(2+) as cofactor. As to expression, widely expressed. Highest expression in brain, kidney and testis (at protein level). Expressed in adipose tissue (at protein level).

It localises to the golgi apparatus membrane. The protein localises to the early endosome membrane. Its subcellular location is the nucleus envelope. It is found in the nucleus. The protein resides in the nucleoplasm. The enzyme catalyses an N-acyl-1,2-diacyl-sn-glycero-3-phosphoethanolamine + H2O = an N-acylethanolamine + a 1,2-diacyl-sn-glycero-3-phosphate + H(+). The catalysed reaction is N-butanoyl-1-hexadecanoyl-2-(9Z,12Z-octadecadienoyl)-sn-glycero-3-phosphoethanolamine + H2O = N-butanoyl ethanolamine + 1-hexadecanoyl-2-(9Z,12Z-octadecadienoyl)-sn-glycero-3-phosphate + H(+). It carries out the reaction N-hexanoyl-1-hexadecanoyl-2-(9Z,12Z-octadecadienoyl)-sn-glycero-3-phosphoethanolamine + H2O = N-hexanoyl ethanolamine + 1-hexadecanoyl-2-(9Z,12Z-octadecadienoyl)-sn-glycero-3-phosphate + H(+). It catalyses the reaction N-octanoyl-1-hexadecanoyl-2-(9Z,12Z-octadecadienoyl)-sn-glycero-3-phosphoethanolamine + H2O = N-octanoyl ethanolamine + 1-hexadecanoyl-2-(9Z,12Z-octadecadienoyl)-sn-glycero-3-phosphate + H(+). The enzyme catalyses N-decanoyl-1-hexadecanoyl-2-(9Z,12Z-octadecadienoyl)-sn-glycero-3-phosphoethanolamine + H2O = N-decanoyl ethanolamine + 1-hexadecanoyl-2-(9Z,12Z-octadecadienoyl)-sn-glycero-3-phosphate + H(+). The catalysed reaction is N-dodecanoyl-1,2-di-(9Z-octadecenoyl)-sn-glycero-3-phosphoethanolamine + H2O = N-dodecanoylethanolamine + 1,2-di-(9Z-octadecenoyl)-sn-glycero-3-phosphate + H(+). It carries out the reaction N-tetradecanoyl-1,2-di-(9Z-octadecenoyl)-sn-glycero-3-phosphoethanolamine + H2O = N-tetradecanoylethanolamine + 1,2-di-(9Z-octadecenoyl)-sn-glycero-3-phosphate + H(+). It catalyses the reaction N-hexadecanoyl-1,2-di-(9Z-octadecenoyl)-sn-glycero-3-phosphoethanolamine + H2O = N-hexadecanoylethanolamine + 1,2-di-(9Z-octadecenoyl)-sn-glycero-3-phosphate + H(+). The enzyme catalyses N,1-dihexadecanoyl-2-(9Z,12Z-octadecadienoyl)-sn-glycero-3-phosphoethanolamine + H2O = 1-hexadecanoyl-2-(9Z,12Z-octadecadienoyl)-sn-glycero-3-phosphate + N-hexadecanoylethanolamine + H(+). The catalysed reaction is N-octadecanoyl-1,2-di-(9Z-octadecenoyl)-sn-glycero-3-phosphoethanolamine + H2O = N-octadecanoyl ethanolamine + 1,2-di-(9Z-octadecenoyl)-sn-glycero-3-phosphate + H(+). It carries out the reaction N,1,2-tri-(9Z-octadecenoyl)-sn-glycero-3-phosphoethanolamine + H2O = N-(9Z-octadecenoyl) ethanolamine + 1,2-di-(9Z-octadecenoyl)-sn-glycero-3-phosphate + H(+). It catalyses the reaction N-(5Z,8Z,11Z,14Z-eicosatetraenoyl)-1,2-diacyl-sn-glycero-3-phosphoethanolamine + H2O = N-(5Z,8Z,11Z,14Z-eicosatetraenoyl)-ethanolamine + a 1,2-diacyl-sn-glycero-3-phosphate + H(+). The enzyme catalyses N-(5Z,8Z,11Z,14Z-eicosatetraenoyl)-1,2-di-(9Z-octadecenoyl)-sn-glycero-3-phosphoethanolamine + H2O = N-(5Z,8Z,11Z,14Z-eicosatetraenoyl)-ethanolamine + 1,2-di-(9Z-octadecenoyl)-sn-glycero-3-phosphate + H(+). The catalysed reaction is 1-O-(1Z-octadecenoyl)-2-(9Z-octadecenoyl)-sn-glycero-3-phospho-N-hexadecanoyl-ethanolamine + H2O = 1-O-(1Z-octadecenoyl)-2-(9Z-octadecenoyl)-sn-glycero-3-phosphate + N-hexadecanoylethanolamine + H(+). It carries out the reaction N,1-diacyl-sn-glycero-3-phosphoethanolamine + H2O = an N-acylethanolamine + a 1-acyl-sn-glycero-3-phosphate + H(+). It catalyses the reaction N,1-dihexadecanoyl-sn-glycero-3-phosphoethanolamine + H2O = N-hexadecanoylethanolamine + 1-hexadecanoyl-sn-glycero-3-phosphate + H(+). The enzyme catalyses N-(5Z,8Z,11Z,14Z-eicosatetraenoyl)-1-(9Z-octadecenoyl)-sn-glycero-3-phosphoethanolamine + H2O = N-(5Z,8Z,11Z,14Z-eicosatetraenoyl)-ethanolamine + 1-(9Z-octadecenoyl)-sn-glycero-3-phosphate + H(+). Activated by divalent cations. Activated by bile acids. D-type phospholipase that hydrolyzes N-acyl-phosphatidylethanolamines (NAPEs) to produce bioactive N-acylethanolamines/fatty acid ethanolamides (NAEs/FAEs) and phosphatidic acid. Cleaves the terminal phosphodiester bond of diacyl- and alkenylacyl-NAPEs, primarily playing a role in the generation of long-chain saturated and monounsaturated NAEs in the brain. May control NAPE homeostasis in dopaminergic neuron membranes and regulate neuron survival, partly through RAC1 activation. As a regulator of lipid metabolism in the adipose tissue, mediates the crosstalk between adipocytes, gut microbiota and immune cells to control body temperature and weight. In particular, regulates energy homeostasis by promoting cold-induced brown or beige adipocyte differentiation program to generate heat from fatty acids and glucose. Has limited D-type phospholipase activity toward N-acyl lyso-NAPEs. The chain is N-acyl-phosphatidylethanolamine-hydrolyzing phospholipase D (NAPEPLD) from Pongo abelii (Sumatran orangutan).